A 204-amino-acid chain; its full sequence is MAYQTREGLPNGWVAQWDERYKCYFYVNESDPKAKPQWECPVRGLTIPPPPSVDHSAPPSGPPPSYSNSAAPATPAASASSAAPAPAPAASQNRAYGAAPQPYPPQGGYPQQPYYYPNQPNYYPAQPAYAQPVYAQPATSARRGRSGVLSNPMVTGLGGLLVGGLAMHEMDEAFDRPEEVVYVDDNNYNNFDDYGGNDFGNDFF.

One can recognise a WW domain in the interval 7–43 (EGLPNGWVAQWDERYKCYFYVNESDPKAKPQWECPVR). The segment at 32 to 117 (PKAKPQWECP…GYPQQPYYYP (86 aa)) is disordered. 2 stretches are compositionally biased toward low complexity: residues 66–100 (YSNSAAPATPAASASSAAPAPAPAASQNRAYGAAP) and 108–117 (GYPQQPYYYP).

Its subcellular location is the cytoplasm. The protein localises to the nucleus. The protein is WW domain-containing protein C11B10.08 of Schizosaccharomyces pombe (strain 972 / ATCC 24843) (Fission yeast).